An 815-amino-acid polypeptide reads, in one-letter code: Phosphatidylinositol 4-phosphate 5-kinase 9 (815 aa).

8 MORN repeats span residues 58–80, 81–103, 104–126, 127–149, 150–172, 173–195, 196–218, and 219–240; these read YSGS…DGCV, YDGE…SGAS, YDGE…NKLT, YKGR…NGDV, FEGS…NKNV, YLGD…TGDS, YEGS…DGGC, and YVGT…AGTR. The region spanning 391-809 is the PIPK domain; the sequence is GHRSYDLMLS…RFLEFIKKVF (419 aa). Residues 769–790 are activation loop; it reads YNMTKKIEHAYKSLHFDSLSIS.

In terms of assembly, interacts with CINV1. In terms of tissue distribution, widely expressed.

The protein localises to the membrane. It localises to the nucleus. It catalyses the reaction a 1,2-diacyl-sn-glycero-3-phospho-(1D-myo-inositol 4-phosphate) + ATP = a 1,2-diacyl-sn-glycero-3-phospho-(1D-myo-inositol-4,5-bisphosphate) + ADP + H(+). In terms of biological role, plays a role in sugar-mediated root development. Interaction with CINV1 induces repression of CINV1 activity and negative regulation of sugar-mediated root cell elongation. The sequence is that of Phosphatidylinositol 4-phosphate 5-kinase 9 (PIP5K9) from Arabidopsis thaliana (Mouse-ear cress).